Reading from the N-terminus, the 499-residue chain is Cytochrome P450 81Q32 (499 aa).

A helical transmembrane segment spans residues 5–25 (TLLYTFLAVVLLSISLKLFPV). N112, N183, and N266 each carry an N-linked (GlcNAc...) asparagine glycan. C434 lines the heme pocket.

Belongs to the cytochrome P450 family. Expressed in leaf epidermis and in the leaf internal phloem-associated parenchyma (IPAP) inside the mesophyll.

Its subcellular location is the membrane. This chain is Cytochrome P450 81Q32, found in Catharanthus roseus (Madagascar periwinkle).